The primary structure comprises 112 residues: ATP synthase subunit c (112 aa).

The next 2 helical transmembrane spans lie at 36-56 (FSVLAAGLGLGVAALGGAIGM) and 81-101 (MFIALAMIEAQVIYALVIALI).

Belongs to the ATPase C chain family. As to quaternary structure, F-type ATPases have 2 components, F(1) - the catalytic core - and F(0) - the membrane proton channel. F(1) has five subunits: alpha(3), beta(3), gamma(1), delta(1), epsilon(1). F(0) has three main subunits: a(1), b(2) and c(10-14). The alpha and beta chains form an alternating ring which encloses part of the gamma chain. F(1) is attached to F(0) by a central stalk formed by the gamma and epsilon chains, while a peripheral stalk is formed by the delta and b chains.

The protein localises to the cell inner membrane. Its function is as follows. F(1)F(0) ATP synthase produces ATP from ADP in the presence of a proton or sodium gradient. F-type ATPases consist of two structural domains, F(1) containing the extramembraneous catalytic core and F(0) containing the membrane proton channel, linked together by a central stalk and a peripheral stalk. During catalysis, ATP synthesis in the catalytic domain of F(1) is coupled via a rotary mechanism of the central stalk subunits to proton translocation. In terms of biological role, key component of the F(0) channel; it plays a direct role in translocation across the membrane. A homomeric c-ring of between 10-14 subunits forms the central stalk rotor element with the F(1) delta and epsilon subunits. The chain is ATP synthase subunit c from Campylobacter jejuni subsp. doylei (strain ATCC BAA-1458 / RM4099 / 269.97).